We begin with the raw amino-acid sequence, 611 residues long: Actin-binding LIM protein 2 (611 aa).

4 LIM zinc-binding domains span residues 22-81, 81-141, 151-210, and 210-270; these read ILCN…LYGT, TRCF…VSVG, RSCG…KFGI, and IRCD…ARTE. Zn(2+)-binding residues include C83, C86, H103, C106, C109, C112, C131, and C134. 8 residues coordinate Zn(2+): C212, C215, H232, C235, C238, C241, H260, and C263. Residues 269–278 show a composition bias toward basic and acidic residues; sequence TEDRNKETRT. Disordered stretches follow at residues 269 to 295 and 336 to 527; these read TEDR…SGSP and YISH…DQRN. Composition is skewed to low complexity over residues 279–295 and 363–372; these read SSES…SGSP and SSPSSTGSVS. 4 positions are modified to phosphoserine: S282, S294, S364, and S367. A compositionally biased stretch (polar residues) spans 393-404; sequence SGRSTPSLSVLS. Residue S452 is modified to Phosphoserine. The residue at position 472 (T472) is a Phosphothreonine. Over residues 473–488 the composition is skewed to polar residues; sequence RTNSPDLDTQSLSHSS. Residues S476 and S578 each carry the phosphoserine modification. One can recognise an HP domain in the interval 543–611; it reads MREYKIYPYD…NDLKKKALLF (69 aa).

Interacts with F-actin and ABRA. As to expression, highly expressed in skeletal muscle.

Its subcellular location is the cytoplasm. Its function is as follows. May act as scaffold protein. May stimulate ABRA activity and ABRA-dependent SRF transcriptional activity. This Homo sapiens (Human) protein is Actin-binding LIM protein 2 (ABLIM2).